We begin with the raw amino-acid sequence, 288 residues long: Keratin-associated protein 5-4 (288 aa).

Tandem repeats lie at residues 49-52, 55-58, 61-64, 201-204, 220-223, 239-242, 249-252, 268-271, and 278-281. Residues 49-281 are 9 X 4 AA repeats of C-C-X-P; sequence CCVPICCCKP…CCSQSSCCVP (233 aa).

It belongs to the KRTAP type 5 family. As to quaternary structure, interacts with hair keratins. In terms of tissue distribution, restricted to hair root, not detected in any other tissues.

In the hair cortex, hair keratin intermediate filaments are embedded in an interfilamentous matrix, consisting of hair keratin-associated protein (KRTAP), which are essential for the formation of a rigid and resistant hair shaft through their extensive disulfide bond cross-linking with abundant cysteine residues of hair keratins. The matrix proteins include the high-sulfur and high-glycine-tyrosine keratins. The sequence is that of Keratin-associated protein 5-4 (KRTAP5-4) from Homo sapiens (Human).